Reading from the N-terminus, the 235-residue chain is Zinc transporter ZIP9 (235 aa).

Asn-2 carries N-linked (GlcNAc...) asparagine glycosylation. A run of 4 helical transmembrane segments spans residues 11–31 (SCVP…CWWT), 75–95 (TTTL…GAAA), 104–124 (LIVF…LVSF), and 138–158 (HLLV…LGLS). A glycan (N-linked (GlcNAc...) asparagine) is linked at Asn-169. 2 helical membrane passes run 172 to 192 (GMAM…HVLP) and 214 to 234 (LEVA…VGHQ).

Belongs to the ZIP transporter (TC 2.A.5) family.

The protein localises to the golgi apparatus. The protein resides in the trans-Golgi network membrane. It is found in the cell membrane. Its subcellular location is the cytoplasm. It localises to the perinuclear region. The protein localises to the mitochondrion. The protein resides in the nucleus. The enzyme catalyses Zn(2+)(in) = Zn(2+)(out). Functionally, transports zinc ions across cell and organelle membranes into the cytoplasm and regulates intracellular zinc homeostasis. Participates in the zinc ions efflux out of the secretory compartments. Regulates intracellular zinc level, resulting in the enhancement of AKT1 and MAPK3/MAPK1 (Erk1/2) phosphorylation in response to the BCR activation. Also functions as a membrane androgen receptor that mediates, through a G protein, the non-classical androgen signaling pathway, characterized by the activation of MAPK3/MAPK1 (Erk1/2) and transcription factors CREB1 or ATF1. This pathway contributes to CLDN1 and CLDN5 expression and tight junction formation between adjacent Sertoli cells. Mediates androgen-induced vascular endothelial cell proliferation through activation of an inhibitory G protein leading to the AKT1 and MAPK3/MAPK1 (Erk1/2) activation which in turn modulate inhibition (phosphorylation) of GSK3B and CCND1 transcription. Moreover, has dual functions as a membrane-bound androgen receptor and as an androgen-dependent zinc transporter both of which are mediated through an inhibitory G protein (Gi) that mediates both MAP kinase and zinc signaling leading to the androgen-dependent apoptotic process. This is Zinc transporter ZIP9 from Macaca fascicularis (Crab-eating macaque).